A 162-amino-acid polypeptide reads, in one-letter code: Regulatory protein RecX (162 aa).

The protein belongs to the RecX family.

Its subcellular location is the cytoplasm. Its function is as follows. Modulates RecA activity. The chain is Regulatory protein RecX from Xanthomonas axonopodis pv. citri (strain 306).